The sequence spans 201 residues: Protein CIMAP1C (201 aa).

An STPGR repeat occupies Pro-171–Arg-186. A disordered region spans residues Ala-172–Arg-201. A compositionally biased stretch (polar residues) spans Trp-191–Arg-201.

Belongs to the CIMAP family.

This chain is Protein CIMAP1C (CIMAP1C), found in Bos taurus (Bovine).